Consider the following 204-residue polypeptide: Leucyl/phenylalanyl-tRNA--protein transferase (204 aa).

The protein belongs to the L/F-transferase family.

The protein localises to the cytoplasm. It carries out the reaction N-terminal L-lysyl-[protein] + L-leucyl-tRNA(Leu) = N-terminal L-leucyl-L-lysyl-[protein] + tRNA(Leu) + H(+). The catalysed reaction is N-terminal L-arginyl-[protein] + L-leucyl-tRNA(Leu) = N-terminal L-leucyl-L-arginyl-[protein] + tRNA(Leu) + H(+). It catalyses the reaction L-phenylalanyl-tRNA(Phe) + an N-terminal L-alpha-aminoacyl-[protein] = an N-terminal L-phenylalanyl-L-alpha-aminoacyl-[protein] + tRNA(Phe). Its function is as follows. Functions in the N-end rule pathway of protein degradation where it conjugates Leu, Phe and, less efficiently, Met from aminoacyl-tRNAs to the N-termini of proteins containing an N-terminal arginine or lysine. The polypeptide is Leucyl/phenylalanyl-tRNA--protein transferase (Sinorhizobium fredii (strain NBRC 101917 / NGR234)).